Consider the following 157-residue polypeptide: Globin (157 aa).

Gly1 is modified (N-acetylglycine). In terms of domain architecture, Globin spans 8-155 (SLSADQKAAI…MANIIDAEQK (148 aa)). Heme b is bound by residues His70 and His102.

This sequence belongs to the globin family. As to quaternary structure, monomer.

In Nerita albicilla (Ox-palate nerite), this protein is Globin.